We begin with the raw amino-acid sequence, 324 residues long: HTH-type transcriptional regulator CysB (324 aa).

Positions 1-59 constitute an HTH lysR-type domain; sequence MKLQQLRYIVEVVNHNLNVSSTAEGLYTSQPGISKQVRMLEDELGIQIFSRSGKHLTQV. Positions 19–38 form a DNA-binding region, H-T-H motif; it reads VSSTAEGLYTSQPGISKQVR.

It belongs to the LysR transcriptional regulatory family. Homotetramer.

It localises to the cytoplasm. In terms of biological role, this protein is a positive regulator of gene expression for the cysteine regulon. The inducer for CysB is N-acetylserine. This Escherichia coli O157:H7 protein is HTH-type transcriptional regulator CysB (cysB).